Reading from the N-terminus, the 72-residue chain is Heat-stable enterotoxin ST-IA/ST-P (72 aa).

The N-terminal stretch at 1 to 19 is a signal peptide; that stretch reads MKKLMLAIFISVLSFPSFS. Residues 20 to 54 constitute a propeptide that is removed on maturation; it reads QSTESLDSSKEKITLETKKCDVVKNNSEKKSENMN. Disulfide bonds link C59/C64, C60/C68, and C63/C71.

This sequence belongs to the heat-stable enterotoxin family.

The protein resides in the secreted. In terms of biological role, toxin which activates the particulate form of guanylate cyclase and increases cyclic GMP levels within the host intestinal epithelial cells. In Escherichia coli, this protein is Heat-stable enterotoxin ST-IA/ST-P (sta1).